A 205-amino-acid polypeptide reads, in one-letter code: CASP-like protein 3A1 (205 aa).

At 1 to 39 (MGIGMDSSTMSGPLVAHSGILDGDYEKRPAVCKMQMRFD) the chain is on the cytoplasmic side. Residues 40 to 60 (LANVGLRVLSLACSLVALVSM) form a helical membrane-spanning segment. The Extracellular segment spans residues 61–89 (ASNQESGVVTVFGFKLPVYSKWSYSDSFE). A helical transmembrane segment spans residues 90–110 (FLVGASAAAAAHSLLQLLLCG). The Cytoplasmic portion of the chain corresponds to 111–125 (MKMVKRASTIPSRNH). Residues 126 to 146 (AWLLFAGDQVFAYGMLAAASA) form a helical membrane-spanning segment. Residues 147–176 (AAGVTNLNRTGFRHSDLPNFCKPLHRFCDK) are Extracellular-facing. Asparagine 154 is a glycosylation site (N-linked (GlcNAc...) asparagine). Residues 177 to 197 (AAISIVFAFISSLILGGSAVL) form a helical membrane-spanning segment. Residues 198–205 (DVFWLSKN) lie on the Cytoplasmic side of the membrane.

It belongs to the Casparian strip membrane proteins (CASP) family. In terms of assembly, homodimer and heterodimers.

The protein localises to the cell membrane. This is CASP-like protein 3A1 from Picea sitchensis (Sitka spruce).